The sequence spans 771 residues: DNA polymerase 1 (771 aa).

Belongs to the DNA polymerase type-B family.

The enzyme catalyses DNA(n) + a 2'-deoxyribonucleoside 5'-triphosphate = DNA(n+1) + diphosphate. In Pyrococcus abyssi (strain GE5 / Orsay), this protein is DNA polymerase 1 (polI).